Reading from the N-terminus, the 945-residue chain is MEQMSVTQFAGELKMPASVLLEQLQKAGVEKTGADQLLTEQDKARLLEYLRRSHGQSQPKGKITLTRKQTSEIRATDSSGRARTVQVEVRKKRVFMKRDEVSAETGSLESAQIEEETAGLPMGEIEPTPEPENIVEPVAEAIPEPEPVREPEPEPEPIVEPEPEPEPEPEPEPQPEPEPRPEPEPATVESGAPAKPEAPVRAPSRPPLRVSILSDEERAAREREARRHQELRARQAADLKAKQDREAAARAAAEARRAEEEARVRAEAERRAEAAKPQPKEAAKAPAGTLHRPAKTEEKPAGKDAKRTARGDTAGESAKRRGLKTRGEVGATTGSWRGARGGGRRGAQDEHKSFQAPTEPVVREIHVPETISVADLAHKMSVKAAEVIKILMKMGSMVTINQVLDQETAMILVEEMGHKAFAAKLDDPDTYLESAEAHHDAAVEPRAPVVTVMGHVDHGKTSLLDYIRRAKVASGEAGGITQHIGAYHVETPRGMLTFLDTPGHEAFTAMRARGAKATDIVILVVAADDGVMPQTREAIHHAKAANVPLVVAVNKIDKPDANPDRVKQELVAEGVLPEEYGGDVMFINVSAKTGVGIDSLLEAVLLQAEVLELTAPVDSPAKGLIIEARLDKGRGPVASLLVLSGTLRKGDVMLVGATFGRIRAMLDENGKAIDHAGPSIPVEVLGLSDVPAAGDEAIALADEKKAREIALFRQGKYREVKLAKQQAAKLESMFEQMAEGEVKTLPLIIKADVQGSQEALVQALNKLSTDEVRVNAIHSAVGAISESDVNLAQASGAVIIGFNTRADAGARKLAETFGVDIRYYNIIYDAVDEVKAALSGMLAPERRENVIGLVEVRQVFKVPKVGTVAGCYVLEGVVKRGSQVRVLRNHVVIHNGELESLKRFKDDVKEVKFGFECGLSIRNFNDVQEGDQLEVFEIQEIARTL.

Disordered regions lie at residues 52-80 (RSHG…DSSG) and 96-357 (MKRD…FQAP). Residues 153–175 (PEPEPIVEPEPEPEPEPEPEPQP) are compositionally biased toward acidic residues. Basic and acidic residues-rich tracts occupy residues 215 to 283 (DEER…KEAA) and 294 to 310 (AKTE…RTAR). The region spanning 445 to 614 (PRAPVVTVMG…LLQAEVLELT (170 aa)) is the tr-type G domain. Residues 454-461 (GHVDHGKT) are G1. Residue 454–461 (GHVDHGKT) coordinates GTP. The segment at 479–483 (GITQH) is G2. Residues 500-503 (DTPG) form a G3 region. GTP is bound by residues 500-504 (DTPGH) and 554-557 (NKID). The tract at residues 554-557 (NKID) is G4. The G5 stretch occupies residues 590 to 592 (SAK).

This sequence belongs to the TRAFAC class translation factor GTPase superfamily. Classic translation factor GTPase family. IF-2 subfamily.

The protein resides in the cytoplasm. One of the essential components for the initiation of protein synthesis. Protects formylmethionyl-tRNA from spontaneous hydrolysis and promotes its binding to the 30S ribosomal subunits. Also involved in the hydrolysis of GTP during the formation of the 70S ribosomal complex. The protein is Translation initiation factor IF-2 of Aromatoleum aromaticum (strain DSM 19018 / LMG 30748 / EbN1) (Azoarcus sp. (strain EbN1)).